Here is a 706-residue protein sequence, read N- to C-terminus: Elongation factor G (706 aa).

A tr-type G domain is found at 8 to 295 (ERYRNFGIMA…AVIDYLPSPL (288 aa)). GTP contacts are provided by residues 17-24 (AHIDAGKT), 92-96 (DTPGH), and 146-149 (NKMD).

Belongs to the TRAFAC class translation factor GTPase superfamily. Classic translation factor GTPase family. EF-G/EF-2 subfamily.

It localises to the cytoplasm. In terms of biological role, catalyzes the GTP-dependent ribosomal translocation step during translation elongation. During this step, the ribosome changes from the pre-translocational (PRE) to the post-translocational (POST) state as the newly formed A-site-bound peptidyl-tRNA and P-site-bound deacylated tRNA move to the P and E sites, respectively. Catalyzes the coordinated movement of the two tRNA molecules, the mRNA and conformational changes in the ribosome. The chain is Elongation factor G from Jannaschia sp. (strain CCS1).